The sequence spans 292 residues: Peroxisomal 2,4-dienoyl-CoA reductase [(3E)-enoyl-CoA-producing] (292 aa).

At A2 the chain carries N-acetylalanine. NADP(+) is bound by residues 35–40 (GGGSGI), 60–64 (RSLQK), and D86. R60 serves as a coordination point for substrate. K64 carries the N6-acetyllysine modification. Residues R88, F118, and 126-128 (SFN) contribute to the substrate site. K151 is subject to N6-acetyllysine. NADP(+) is bound by residues K182 and 208-214 (PGAISGT). R219 is a substrate binding site. Residue S287 is modified to Phosphoserine. Positions 290–292 (AKL) match the Microbody targeting signal motif. An N6-acetyllysine modification is found at K291.

It belongs to the short-chain dehydrogenases/reductases (SDR) family. 2,4-dienoyl-CoA reductase subfamily. Monomer, dimer and oligomer.

The protein resides in the peroxisome. The enzyme catalyses a (2E,4Z)-dienoyl-CoA + NADPH + H(+) = a 4,5-saturated-(3E)-enoyl-CoA + NADP(+). It carries out the reaction a (2E,4E)-dienoyl-CoA + NADPH + H(+) = a 4,5-saturated-(3E)-enoyl-CoA + NADP(+). The catalysed reaction is (2E,4E)-hexadienoyl-CoA + NADPH + H(+) = (3E)-hexenoyl-CoA + NADP(+). It catalyses the reaction (2E,4E)-decadienoyl-CoA + NADPH + H(+) = (3E)-decenoyl-CoA + NADP(+). The enzyme catalyses (2E,4Z,7Z,10Z,13Z,16Z,19Z)-docosaheptaenoyl-CoA + NADPH + H(+) = (3E,7Z,10Z,13Z,16Z,19Z)-docosahexaenoyl-CoA + NADP(+). Auxiliary enzyme of beta-oxidation. Participates in the degradation of unsaturated fatty enoyl-CoA esters having double bonds in both even- and odd-numbered positions in peroxisome. Catalyzes the NADP-dependent reduction of 2,4-dienoyl-CoA to yield trans-3-enoyl-CoA. Has activity towards short and medium chain 2,4-dienoyl-CoAs, but also towards 2,4,7,10,13,16,19-docosaheptaenoyl-CoA, suggesting that it does not constitute a rate limiting step in the peroxisomal degradation of docosahexaenoic acid. In Mus musculus (Mouse), this protein is Peroxisomal 2,4-dienoyl-CoA reductase [(3E)-enoyl-CoA-producing] (Decr2).